Consider the following 312-residue polypeptide: Ribosomal protein L11 methyltransferase (312 aa).

The S-adenosyl-L-methionine site is built by Thr162, Gly183, Asp205, and Asn248.

The protein belongs to the methyltransferase superfamily. PrmA family.

It is found in the cytoplasm. It carries out the reaction L-lysyl-[protein] + 3 S-adenosyl-L-methionine = N(6),N(6),N(6)-trimethyl-L-lysyl-[protein] + 3 S-adenosyl-L-homocysteine + 3 H(+). In terms of biological role, methylates ribosomal protein L11. In Bacillus cereus (strain Q1), this protein is Ribosomal protein L11 methyltransferase.